The primary structure comprises 853 residues: DNA mismatch repair protein MutS (853 aa).

614 to 621 (GPNMGGKS) contacts ATP.

The protein belongs to the DNA mismatch repair MutS family.

Functionally, this protein is involved in the repair of mismatches in DNA. It is possible that it carries out the mismatch recognition step. This protein has a weak ATPase activity. The polypeptide is DNA mismatch repair protein MutS (Citrobacter koseri (strain ATCC BAA-895 / CDC 4225-83 / SGSC4696)).